The following is a 421-amino-acid chain: 3-phosphoshikimate 1-carboxyvinyltransferase (421 aa).

3-phosphoshikimate-binding residues include Lys-19, Ser-20, and Arg-24. Lys-19 lines the phosphoenolpyruvate pocket. Phosphoenolpyruvate-binding residues include Gly-88 and Arg-116. 4 residues coordinate 3-phosphoshikimate: Ser-160, Gln-162, Asp-307, and Lys-334. A phosphoenolpyruvate-binding site is contributed by Gln-162. The active-site Proton acceptor is Asp-307. The phosphoenolpyruvate site is built by Arg-338 and Arg-380.

This sequence belongs to the EPSP synthase family. In terms of assembly, monomer.

It localises to the cytoplasm. The enzyme catalyses 3-phosphoshikimate + phosphoenolpyruvate = 5-O-(1-carboxyvinyl)-3-phosphoshikimate + phosphate. It participates in metabolic intermediate biosynthesis; chorismate biosynthesis; chorismate from D-erythrose 4-phosphate and phosphoenolpyruvate: step 6/7. Functionally, catalyzes the transfer of the enolpyruvyl moiety of phosphoenolpyruvate (PEP) to the 5-hydroxyl of shikimate-3-phosphate (S3P) to produce enolpyruvyl shikimate-3-phosphate and inorganic phosphate. This Thermotoga sp. (strain RQ2) protein is 3-phosphoshikimate 1-carboxyvinyltransferase.